The primary structure comprises 230 residues: DNA mismatch repair protein MutH (230 aa).

This sequence belongs to the MutH family.

Its subcellular location is the cytoplasm. Functionally, sequence-specific endonuclease that cleaves unmethylated GATC sequences. It is involved in DNA mismatch repair. The polypeptide is DNA mismatch repair protein MutH (Enterobacter sp. (strain 638)).